The chain runs to 313 residues: Protoheme IX farnesyltransferase (313 aa).

A run of 8 helical transmembrane segments spans residues 32 to 52, 53 to 73, 120 to 140, 153 to 173, 180 to 200, 226 to 246, 248 to 268, and 284 to 304; these read VMSL…GDFH, PVLA…AGAL, VLVN…YVVI, IVIG…AVTG, LLLF…LALF, ILLY…LGYF, AVYG…AIRV, and LFKF…IEVV.

The protein belongs to the UbiA prenyltransferase family. Protoheme IX farnesyltransferase subfamily.

It localises to the cell inner membrane. The catalysed reaction is heme b + (2E,6E)-farnesyl diphosphate + H2O = Fe(II)-heme o + diphosphate. It functions in the pathway porphyrin-containing compound metabolism; heme O biosynthesis; heme O from protoheme: step 1/1. Its function is as follows. Converts heme B (protoheme IX) to heme O by substitution of the vinyl group on carbon 2 of heme B porphyrin ring with a hydroxyethyl farnesyl side group. In Rhodopseudomonas palustris (strain BisB5), this protein is Protoheme IX farnesyltransferase.